Consider the following 341-residue polypeptide: Probable membrane-associated kinase regulator 1 (341 aa).

Disordered stretches follow at residues 1–29 (MRRQ…FEFN), 67–122 (TLGS…SSRP), 158–185 (PKTN…KRMS), 206–230 (LSPK…NNIR), and 288–310 (RGGF…SVSS). Low complexity-rich tracts occupy residues 12–29 (PPQS…FEFN), 67–108 (TLGS…SFPL), and 167–180 (SSSS…APSS). Residues 208-230 (PKQSSNIKTESSSSLKDSGNNIR) are compositionally biased toward polar residues. Positions 297-310 (SCSSSSSNNNSVSS) are enriched in low complexity.

A C-terminus-derived peptide binds BRI1 in vitro.

It localises to the cell membrane. May negatively regulate brassinosteroid signaling. In Arabidopsis thaliana (Mouse-ear cress), this protein is Probable membrane-associated kinase regulator 1 (MAKR1).